Consider the following 925-residue polypeptide: Bifunctional imidazolonepropionase/histidine ammonia-lyase (925 aa).

Positions 1–414 (MTKNSSTVFT…IKPHVRMEPF (414 aa)) are imidazolonepropionase. Residues His-73 and His-75 each contribute to the Fe(3+) site. Zn(2+) is bound by residues His-73 and His-75. 4-imidazolone-5-propanoate-binding residues include Arg-82, Tyr-145, and His-178. Residue Tyr-145 participates in N-formimidoyl-L-glutamate binding. His-243 contacts Fe(3+). His-243 is a Zn(2+) binding site. Gln-246 contacts 4-imidazolone-5-propanoate. Residue Asp-318 coordinates Fe(3+). Residue Asp-318 coordinates Zn(2+). N-formimidoyl-L-glutamate contacts are provided by Asn-320 and Gly-322. Thr-323 serves as a coordination point for 4-imidazolone-5-propanoate. A histidine ammonia-lyase region spans residues 415-925 (MTIILKPGSV…SAGILPDLEA (511 aa)). The segment at residues 556 to 558 (ASG) is a cross-link (5-imidazolinone (Ala-Gly)). Ser-557 is modified (2,3-didehydroalanine (Ser)).

In the N-terminal section; belongs to the metallo-dependent hydrolases superfamily. HutI family. This sequence in the C-terminal section; belongs to the PAL/histidase family. The cofactor is Zn(2+). Fe(3+) is required as a cofactor. Post-translationally, contains an active site 4-methylidene-imidazol-5-one (MIO), which is formed autocatalytically by cyclization and dehydration of residues Ala-Ser-Gly.

The protein resides in the cytoplasm. The enzyme catalyses 4-imidazolone-5-propanoate + H2O = N-formimidoyl-L-glutamate. It catalyses the reaction L-histidine = trans-urocanate + NH4(+). It participates in amino-acid degradation; L-histidine degradation into L-glutamate; N-formimidoyl-L-glutamate from L-histidine: step 1/3. It functions in the pathway amino-acid degradation; L-histidine degradation into L-glutamate; N-formimidoyl-L-glutamate from L-histidine: step 3/3. In terms of biological role, catalyzes the hydrolytic cleavage of the carbon-nitrogen bond in imidazolone-5-propanoate to yield N-formimidoyl-L-glutamate. It is the third step in the universal histidine degradation pathway. The protein is Bifunctional imidazolonepropionase/histidine ammonia-lyase (hutIH) of Brucella melitensis biotype 1 (strain ATCC 23456 / CCUG 17765 / NCTC 10094 / 16M).